The following is a 423-amino-acid chain: D-tagatose-1,6-bisphosphate aldolase subunit GatZ (423 aa).

This sequence belongs to the GatZ/KbaZ family. GatZ subfamily. As to quaternary structure, forms a complex with GatY.

The protein operates within carbohydrate metabolism; D-tagatose 6-phosphate degradation; D-glyceraldehyde 3-phosphate and glycerone phosphate from D-tagatose 6-phosphate: step 2/2. Component of the tagatose-1,6-bisphosphate aldolase GatYZ that is required for full activity and stability of the Y subunit. Could have a chaperone-like function for the proper and stable folding of GatY. When expressed alone, GatZ does not show any aldolase activity. Is involved in the catabolism of galactitol. The sequence is that of D-tagatose-1,6-bisphosphate aldolase subunit GatZ from Klebsiella pneumoniae subsp. pneumoniae (strain ATCC 700721 / MGH 78578).